The chain runs to 435 residues: Amidase 1 (435 aa).

Catalysis depends on charge relay system residues lysine 38 and serine 115. Serine 139 (acyl-ester intermediate) is an active-site residue.

Belongs to the amidase family.

Its subcellular location is the cytoplasm. It is found in the nucleus. It localises to the nucleoplasm. It carries out the reaction a monocarboxylic acid amide + H2O = a monocarboxylate + NH4(+). Amidase involved in auxin biosynthesis. Converts indole-3-acetamide (IAM) to indole-3-acetate, and phenyl-2-acetamide (PAM) to phenyl-2-acetate. Substrate preference is PAM &gt; IAM. The polypeptide is Amidase 1 (Oryza sativa subsp. japonica (Rice)).